A 556-amino-acid chain; its full sequence is Arginine--tRNA ligase (556 aa).

Positions 134-144 match the 'HIGH' region motif; sequence ANPTGPLHIGH.

The protein belongs to the class-I aminoacyl-tRNA synthetase family. Monomer.

The protein resides in the cytoplasm. The enzyme catalyses tRNA(Arg) + L-arginine + ATP = L-arginyl-tRNA(Arg) + AMP + diphosphate. The protein is Arginine--tRNA ligase of Micrococcus luteus (strain ATCC 4698 / DSM 20030 / JCM 1464 / CCM 169 / CCUG 5858 / IAM 1056 / NBRC 3333 / NCIMB 9278 / NCTC 2665 / VKM Ac-2230) (Micrococcus lysodeikticus).